We begin with the raw amino-acid sequence, 301 residues long: tRNA dimethylallyltransferase (301 aa).

An ATP-binding site is contributed by 9–16; it reads GPTASGKS. 11-16 lines the substrate pocket; the sequence is TASGKS. The interaction with substrate tRNA stretch occupies residues 34–37; the sequence is DSMQ.

This sequence belongs to the IPP transferase family. Monomer. Mg(2+) is required as a cofactor.

The catalysed reaction is adenosine(37) in tRNA + dimethylallyl diphosphate = N(6)-dimethylallyladenosine(37) in tRNA + diphosphate. Catalyzes the transfer of a dimethylallyl group onto the adenine at position 37 in tRNAs that read codons beginning with uridine, leading to the formation of N6-(dimethylallyl)adenosine (i(6)A). This is tRNA dimethylallyltransferase from Corynebacterium efficiens (strain DSM 44549 / YS-314 / AJ 12310 / JCM 11189 / NBRC 100395).